The following is a 130-amino-acid chain: Small ribosomal subunit protein uS9 (130 aa).

The interval 104–130 (LTRDPRMKERKKYGLKKARRAPQFSKR) is disordered. A compositionally biased stretch (basic residues) spans 111-130 (KERKKYGLKKARRAPQFSKR).

Belongs to the universal ribosomal protein uS9 family.

This is Small ribosomal subunit protein uS9 from Ruminiclostridium cellulolyticum (strain ATCC 35319 / DSM 5812 / JCM 6584 / H10) (Clostridium cellulolyticum).